The chain runs to 259 residues: Putative protein phosphatase (259 aa).

One can recognise a PPM-type phosphatase domain in the interval 8 to 255; the sequence is LFASLSKKGP…DNITLNLINL (248 aa).

The catalysed reaction is O-phospho-L-seryl-[protein] + H2O = L-seryl-[protein] + phosphate. It catalyses the reaction O-phospho-L-threonyl-[protein] + H2O = L-threonyl-[protein] + phosphate. The chain is Putative protein phosphatase from Mycoplasma pneumoniae (strain ATCC 29342 / M129 / Subtype 1) (Mycoplasmoides pneumoniae).